A 434-amino-acid polypeptide reads, in one-letter code: Nicotinate phosphoribosyltransferase (434 aa).

His242 bears the Phosphohistidine; by autocatalysis mark.

It belongs to the NAPRTase family. Post-translationally, transiently phosphorylated on a His residue during the reaction cycle. Phosphorylation strongly increases the affinity for substrates and increases the rate of nicotinate D-ribonucleotide production. Dephosphorylation regenerates the low-affinity form of the enzyme, leading to product release.

The enzyme catalyses nicotinate + 5-phospho-alpha-D-ribose 1-diphosphate + ATP + H2O = nicotinate beta-D-ribonucleotide + ADP + phosphate + diphosphate. Its pathway is cofactor biosynthesis; NAD(+) biosynthesis; nicotinate D-ribonucleotide from nicotinate: step 1/1. Catalyzes the synthesis of beta-nicotinate D-ribonucleotide from nicotinate and 5-phospho-D-ribose 1-phosphate at the expense of ATP. This chain is Nicotinate phosphoribosyltransferase, found in Chelativorans sp. (strain BNC1).